We begin with the raw amino-acid sequence, 1059 residues long: Protein cappuccino (1059 aa).

Composition is skewed to polar residues over residues 62–80 (AAVT…NESG) and 90–123 (ATTS…SAAS). Disordered stretches follow at residues 62–146 (AAVT…GTPT) and 448–647 (QTES…TAPP). Residues 133-142 (LPLPPPPPGF) show a composition bias toward pro residues. Basic and acidic residues predominate over residues 468–481 (SDNESAKEDGEKPH). Residues 480 to 560 (PHAVAPPPPP…PPPPMSASPS (81 aa)) enclose the FH1 domain. Residues 483–541 (VAPPPPPPPPPLHAFVAPPPPPPPPPPPPPPLANYGAPPPPPPPPPGSGSAPPPPPPAP) are compositionally biased toward pro residues. Positions 585–1032 (RKSAVNPPKP…KKSKQAQIES (448 aa)) constitute an FH2 domain. Residues 620 to 629 (TDSTENSGSS) show a composition bias toward polar residues. The segment at 1049–1059 (KERMLMRRSKN) is important for interaction with spir.

This sequence belongs to the formin homology family. Cappuccino subfamily. As to quaternary structure, interacts with wash. Interacts with spir.

Its subcellular location is the cytoplasm. The protein resides in the cytoskeleton. It is found in the cytosol. The protein localises to the membrane. It localises to the cytoplasmic vesicle membrane. Its function is as follows. Acts as an actin nucleation factor and promotes assembly of actin filaments together with spir. May play a role in intracellular vesicle transport along actin fibers, providing a novel link between actin cytoskeleton dynamics and intracellular transport. This Drosophila melanogaster (Fruit fly) protein is Protein cappuccino (capu).